The following is a 1070-amino-acid chain: DNA-directed RNA polymerase subunit beta (1070 aa).

Belongs to the RNA polymerase beta chain family. In plastids the minimal PEP RNA polymerase catalytic core is composed of four subunits: alpha, beta, beta', and beta''. When a (nuclear-encoded) sigma factor is associated with the core the holoenzyme is formed, which can initiate transcription.

The protein resides in the plastid. Its subcellular location is the chloroplast. It carries out the reaction RNA(n) + a ribonucleoside 5'-triphosphate = RNA(n+1) + diphosphate. Functionally, DNA-dependent RNA polymerase catalyzes the transcription of DNA into RNA using the four ribonucleoside triphosphates as substrates. The chain is DNA-directed RNA polymerase subunit beta from Dioscorea elephantipes (Elephant's foot yam).